Consider the following 472-residue polypeptide: 3-isopropylmalate dehydratase large subunit (472 aa).

The [4Fe-4S] cluster site is built by Cys353, Cys414, and Cys417.

Belongs to the aconitase/IPM isomerase family. LeuC type 1 subfamily. As to quaternary structure, heterodimer of LeuC and LeuD. The cofactor is [4Fe-4S] cluster.

The catalysed reaction is (2R,3S)-3-isopropylmalate = (2S)-2-isopropylmalate. It functions in the pathway amino-acid biosynthesis; L-leucine biosynthesis; L-leucine from 3-methyl-2-oxobutanoate: step 2/4. Its function is as follows. Catalyzes the isomerization between 2-isopropylmalate and 3-isopropylmalate, via the formation of 2-isopropylmaleate. This Acinetobacter baumannii (strain AB307-0294) protein is 3-isopropylmalate dehydratase large subunit.